The primary structure comprises 501 residues: Cytokinin dehydrogenase 2 (501 aa).

The first 22 residues, 1–22, serve as a signal peptide directing secretion; that stretch reads MANLRLMITLITVLMITKSSNG. Residues Asn-32 and Asn-51 are each glycosylated (N-linked (GlcNAc...) asparagine). The FAD-binding PCMH-type domain occupies 53–226; sequence TTVTPGGVIC…TRARIVLDHA (174 aa). FAD-binding residues include Ala-87, Gly-89, and Gly-91. His-92 bears the Pros-8alpha-FAD histidine mark. Ser-93 and Gln-97 together coordinate FAD. Asn-107 carries an N-linked (GlcNAc...) asparagine glycan. 8 residues coordinate FAD: Asp-150, Thr-155, Ser-161, Ile-165, Ile-216, Tyr-460, Ser-495, and Gln-498.

Belongs to the oxygen-dependent FAD-linked oxidoreductase family. It depends on FAD as a cofactor. In terms of tissue distribution, expressed in the shoot apex, in stipules, and occasionally in the most apical part of the inflorescence stems. Not detected in roots.

The protein resides in the endoplasmic reticulum. It localises to the secreted. Its subcellular location is the extracellular space. It carries out the reaction N(6)-dimethylallyladenine + A + H2O = 3-methyl-2-butenal + adenine + AH2. In terms of biological role, catalyzes the oxidation of cytokinins, a family of N(6)-substituted adenine derivatives that are plant hormones, where the substituent is an isopentenyl group. Modulates asymmetric cytokinin signaling in emerged lateral roots. Its activity determines cell elongation and number in emerged lateral roots and defines angular growth of lateral roots. The sequence is that of Cytokinin dehydrogenase 2 (CKX2) from Arabidopsis thaliana (Mouse-ear cress).